Consider the following 449-residue polypeptide: Ribosomal protein uS12 methylthiotransferase RimO (449 aa).

Positions 5-116 (PTIAISHLGC…IVDVVQRVEN (112 aa)) constitute an MTTase N-terminal domain. Residues cysteine 14, cysteine 50, cysteine 79, cysteine 154, cysteine 158, and cysteine 161 each coordinate [4Fe-4S] cluster. Residues 140–369 (TTTEGVAYLR…MEVQQPISIK (230 aa)) enclose the Radical SAM core domain. A TRAM domain is found at 372-438 (QNCIGQTVPV…VYDLYGKTNL (67 aa)).

The protein belongs to the methylthiotransferase family. RimO subfamily. The cofactor is [4Fe-4S] cluster.

The protein resides in the cytoplasm. It carries out the reaction L-aspartate(89)-[ribosomal protein uS12]-hydrogen + (sulfur carrier)-SH + AH2 + 2 S-adenosyl-L-methionine = 3-methylsulfanyl-L-aspartate(89)-[ribosomal protein uS12]-hydrogen + (sulfur carrier)-H + 5'-deoxyadenosine + L-methionine + A + S-adenosyl-L-homocysteine + 2 H(+). Functionally, catalyzes the methylthiolation of an aspartic acid residue of ribosomal protein uS12. This is Ribosomal protein uS12 methylthiotransferase RimO from Rippkaea orientalis (strain PCC 8801 / RF-1) (Cyanothece sp. (strain PCC 8801)).